The following is a 524-amino-acid chain: 11-oxo-beta-amyrin 30-oxidase (524 aa).

Residues 9-29 traverse the membrane as a helical segment; sequence GTTVIISVLSVLLAVIPWYLL. Cysteine 472 provides a ligand contact to heme.

The protein belongs to the cytochrome P450 family. Heme is required as a cofactor. In terms of tissue distribution, expressed in flowers. Detected in roots upon salt treatment.

The protein localises to the membrane. The enzyme catalyses 11-oxo-beta-amyrin + 3 reduced [NADPH--hemoprotein reductase] + 3 O2 = glycyrrhetinate + 3 oxidized [NADPH--hemoprotein reductase] + 4 H2O + 4 H(+). Involved in the biosynthesis of triterpenoid saponins. Catalyzes three sequential oxidation steps at C-30 of 11-oxo-beta-amyrin. Also able to catalyze sequential C-30 hydroxylation of beta-amyrin to produce 30-hydroxy-beta-amyrin and 11-deoxoglycyrrhetinic acid. The sequence is that of 11-oxo-beta-amyrin 30-oxidase (CYP72A63) from Medicago truncatula (Barrel medic).